The primary structure comprises 188 residues: MRLPLPLLLLFGCRAILGSFGDRVSLSATAPTLDDEEKYASHMPTHLRCDACRAVAYQMGQHLAKAEAKSHTPDSSGSQELSESTYTDVLDRTCSQNWQSYGVQEVNQMKRLMGPGLSKGPEPSISVMITGGPWPNRLSMTCFHYLGEFGEDQIYEAYRQGHETLEALLCGGTHGSCSQEIPAQREEL.

An N-terminal signal peptide occupies residues Met-1–Gly-21. 3 disulfides stabilise this stretch: Cys-49–Cys-177, Cys-52–Cys-170, and Cys-94–Cys-142. The Prevents secretion from ER signature appears at Arg-185–Leu-188.

It belongs to the MZB1 family. In terms of assembly, part of the ER chaperone complex, a multi-protein complex in the endoplasmic reticulum containing a large number of molecular chaperones which associates with unassembled incompletely folded immunoglobulin heavy chains. Interacts with HSP90B1 and PDIA3 in a calcium-dependent manner. Forms an interchain disulfide bond with IgM monomers.

The protein localises to the endoplasmic reticulum lumen. It is found in the secreted. Functionally, associates with immunoglobulin M (IgM) heavy and light chains and promotes IgM assembly and secretion. May exert its effect by acting as a molecular chaperone or as an oxidoreductase as it displays a low level of oxidoreductase activity. Helps to diversify peripheral B-cell functions by regulating Ca(2+) stores, antibody secretion, and integrin activation. Acts as a hormone-regulated adipokine/pro-inflammatory cytokine that is implicated in causing chronic inflammation, affecting cellular expansion and blunting insulin response in adipocytes. May have a role in the onset of insulin resistance. The sequence is that of Marginal zone B- and B1-cell-specific protein (Mzb1) from Rattus norvegicus (Rat).